The sequence spans 554 residues: Membrane protein insertase YidC (554 aa).

5 helical membrane-spanning segments follow: residues 7–24, 362–382, 436–456, 475–495, and 510–530; these read VLWV…DNWQ, FVGN…AVFF, LPVV…LASV, PFFI…SLNP, and PIAF…YYVV.

It belongs to the OXA1/ALB3/YidC family. Type 1 subfamily. In terms of assembly, interacts with the Sec translocase complex via SecD. Specifically interacts with transmembrane segments of nascent integral membrane proteins during membrane integration.

The protein resides in the cell inner membrane. Its function is as follows. Required for the insertion and/or proper folding and/or complex formation of integral membrane proteins into the membrane. Involved in integration of membrane proteins that insert both dependently and independently of the Sec translocase complex, as well as at least some lipoproteins. Aids folding of multispanning membrane proteins. In Burkholderia ambifaria (strain MC40-6), this protein is Membrane protein insertase YidC.